Reading from the N-terminus, the 639-residue chain is Protein P1 (639 aa).

The N-terminal stretch at 1-20 is a signal peptide; the sequence is MNRFTAYAALFFIFSLCSTA. The next 3 helical transmembrane spans lie at 121–141, 144–164, and 172–192; these read AASV…WTLA, ITLF…LGCI, and ALSL…KIIW. A Peptidase S39 domain is found at 207–399; sequence VEGYKGFSVP…GITSPNYVFE (193 aa). Active-site for protease activity residues include His255, Asp286, and Ser354. Disordered regions lie at residues 456–510 and 542–639; these read TNAP…AAIS and VSQK…NSKA. Residues 463 to 487 show a composition bias toward polar residues; it reads TAQTNSAEKTAPSTSAEKTAPTNKP. Residues 551-561 show a composition bias toward basic residues; the sequence is KQNKRGRRGGK. The span at 562–576 shows a compositional bias: polar residues; that stretch reads NKQNNLPPTSTQSIS.

This sequence belongs to the peptidase S39B family. Specific enzymatic cleavages in vivo yield mature proteins. The protease probably cleaves itself and releases the VPg protein. The VPg protein is probably further cleaved in its C-terminus.

The protein localises to the membrane. Its function is as follows. Precursor from which the VPg molecule is probably released at the onset of the RNA synthesis. Essential for virus replication. The polypeptide is Protein P1 (Solanum tuberosum (Potato)).